Here is a 309-residue protein sequence, read N- to C-terminus: Chronophin (309 aa).

The Nucleophile role is filled by D25. D25 and D27 together coordinate Mg(2+). The Proton donor role is filled by D27. Residues S58 to N60, H178, and K209 contribute to the substrate site. D234 provides a ligand contact to Mg(2+).

This sequence belongs to the HAD-like hydrolase superfamily. As to quaternary structure, homodimer. Requires Mg(2+) as cofactor.

The protein resides in the cytoplasm. It localises to the cytosol. The protein localises to the cytoskeleton. Its subcellular location is the cell projection. It is found in the ruffle membrane. The protein resides in the lamellipodium membrane. It localises to the cell membrane. The enzyme catalyses pyridoxal 5'-phosphate + H2O = pyridoxal + phosphate. It catalyses the reaction pyridoxine 5'-phosphate + H2O = pyridoxine + phosphate. It carries out the reaction pyridoxamine + phosphate = pyridoxamine 5'-phosphate + H2O. The catalysed reaction is O-phospho-L-seryl-[protein] + H2O = L-seryl-[protein] + phosphate. Its function is as follows. Functions as a pyridoxal phosphate (PLP) phosphatase, which also catalyzes the dephosphorylation of pyridoxine 5'-phosphate (PNP) and pyridoxamine 5'-phosphate (PMP), with order of substrate preference PLP &gt; PNP &gt; PMP and therefore plays a role in vitamin B6 metabolism. Also functions as a protein serine phosphatase that specifically dephosphorylates 'Ser-3' in proteins of the actin-depolymerizing factor (ADF)/cofilin family like CFL1 and DSTN. Thereby, regulates cofilin-dependent actin cytoskeleton reorganization, being required for normal progress through mitosis and normal cytokinesis. Does not dephosphorylate phosphothreonines in LIMK1. Does not dephosphorylate peptides containing phosphotyrosine. This Rattus norvegicus (Rat) protein is Chronophin.